A 747-amino-acid polypeptide reads, in one-letter code: Probable cyclic nucleotide-gated ion channel 6 (747 aa).

Residues 1–117 (MFDTCGPKGV…DKFLLLCNKL (117 aa)) are Cytoplasmic-facing. Residues 118–138 (FVASCILAVSVDPLFLYLPFI) traverse the membrane as a helical segment. Over 139 to 150 (NDKAKCVGIDRK) the chain is Extracellular. A helical transmembrane segment spans residues 151–171 (LAIIVTTIRTVIDSFYLFHMA). Topologically, residues 172–205 (LRFRTAYVAPSSRVFGRGELVIDPAQIAKRYLQQ) are cytoplasmic. A helical membrane pass occupies residues 206 to 226 (YFIIDLLSVLPVPQIIVWRFL). Residues 227–239 (YTSRGANVLATKQ) are Extracellular-facing. A helical transmembrane segment spans residues 240–260 (ALRYIVLVQYIPRFLRMYPLS). Residues 261–280 (SELKRTAGVFAETAWAGAAY) are Cytoplasmic-facing. Residues 281–301 (YLLLYMLASHIVGALWYLLAL) traverse the membrane as a helical segment. Topologically, residues 302–407 (ERNNDCWSKA…GQGLETSTYP (106 aa)) are extracellular. The chain crosses the membrane as a helical span at residues 408 to 428 (GEVIFSITLAIAGLLLFALLI). Residues 429 to 747 (GNMQTYLQSL…PEPDFSAEDH (319 aa)) lie on the Cytoplasmic side of the membrane. A nucleoside 3',5'-cyclic phosphate-binding positions include 514-638 (LFEN…SRQV) and D585. Positions 630–645 (FRRLHSRQVQHTFRFY) are calmodulin-binding. Residues 650 to 679 (RTWAACFMQAAWRRYIKRKKLEQLRKEEEE) enclose the IQ domain.

The protein belongs to the cyclic nucleotide-gated cation channel (TC 1.A.1.5) family. Homotetramer or heterotetramer.

It localises to the cell membrane. Functionally, probable cyclic nucleotide-gated ion channel. This Arabidopsis thaliana (Mouse-ear cress) protein is Probable cyclic nucleotide-gated ion channel 6 (CNGC6).